We begin with the raw amino-acid sequence, 451 residues long: uncharacterized protein (451 aa).

One can recognise an FAD-binding PCMH-type domain in the interval 29–204 (LERYPDIIVF…TSMTFKAVPI (176 aa)). Position 66 is a pros-8alpha-FAD histidine (His-66).

It belongs to the oxygen-dependent FAD-linked oxidoreductase family. The cofactor is FAD.

This is an uncharacterized protein from Bacillus subtilis (strain 168).